The primary structure comprises 488 residues: Monothiol glutaredoxin-S17 (488 aa).

The region spanning 2-107 (SGTVKDIVSK…LANKVGKVAG (106 aa)) is the Thioredoxin domain. 3 Glutaredoxin domains span residues 154–256 (KSRL…GITT), 284–386 (RARL…GITG), and 391–488 (EDRL…TLSE). Lys408 contributes to the glutathione binding site. Cys416 is a binding site for [2Fe-2S] cluster. Glutathione is bound by residues Arg445, Phe457, and 470 to 471 (CD).

Belongs to the glutaredoxin family. CGFS subfamily. As to quaternary structure, [2Fe-2S]-bridged holo-homodimer. Interacts in vitro with SUFE1, BOLA1, BOLA2 and BOLA4. Interacts in vivo only with BOLA2. Interacts with RGLG3 and RGLG4. Ubiquitinated at Lys-154. Polyubiquitinated by RGLG3 and RGLG4. Polyubiquitination of GRXS17 leads to its degradation by the proteasome.

It localises to the cytoplasm. Functionally, may only reduce GSH-thiol disulfides, but not protein disulfides. Participates probably to the maturation of iron-sulfur proteins and to the regulation of the redox state of the BOLA proteins. The GRXS17-BOLA2 heterodimer binds a labile, oxygen sensitive iron-sulfur cluster. This is Monothiol glutaredoxin-S17 from Arabidopsis thaliana (Mouse-ear cress).